Reading from the N-terminus, the 557-residue chain is MPDNKRSQHITQGVARSPNRSMYYALGYKKEDFSNPMIGVANGHSTITPCNSGLQKLADAAVAAVKASNANPQIFGTPTISDGMSMGTEGMKYSLISREVIADCIETCAQGQWMDGVVVIGGCDKNMPGGMIALARTNVPGIYVYGGTIKPGNWKGKDLTIVSSFEAVGEFTAGRMSEEDFEGVERNACPTSGSCGGMYTANTMSSSFEALGMSLLYSSTMANPDQEKVDSAAESARVLVEAVRRDLKPRDIITRKSIENAVAVIMATGGSTNAVLHYLAIAHAAGVEWTIDDFERVRQRVPVICNLKPSGQYVATDLHKAGGIPQVMKILLNAGLLHGDCVTITGKTLAEELANVPDQPRADQDVILPIERALYQQGHLAILKGNLAEEGAVAKITGLKNPVISGPARVFDDEQSAMTAILADQIKAGDVLVLRYLGPKGGPGMPEMLAPTSAIIGKGLGESVGFVTDGRFSGGTWGMVVGHVAPEAFVGGTIALVQEGDSITIDAHQRLLQLNVPEDELARRRAAWKQPAPRYTRGVLAKFAQLTSTASKGAVTD.

Cys-50 provides a ligand contact to [2Fe-2S] cluster. Asp-82 contacts Mg(2+). Cys-123 serves as a coordination point for [2Fe-2S] cluster. Positions 124 and 125 each coordinate Mg(2+). Position 125 is an N6-carboxylysine (Lys-125). Cys-195 lines the [2Fe-2S] cluster pocket. Glu-447 is a Mg(2+) binding site. Catalysis depends on Ser-473, which acts as the Proton acceptor.

It belongs to the IlvD/Edd family. As to quaternary structure, homodimer. It depends on [2Fe-2S] cluster as a cofactor. Requires Mg(2+) as cofactor.

The catalysed reaction is (2R)-2,3-dihydroxy-3-methylbutanoate = 3-methyl-2-oxobutanoate + H2O. It catalyses the reaction (2R,3R)-2,3-dihydroxy-3-methylpentanoate = (S)-3-methyl-2-oxopentanoate + H2O. It participates in amino-acid biosynthesis; L-isoleucine biosynthesis; L-isoleucine from 2-oxobutanoate: step 3/4. It functions in the pathway amino-acid biosynthesis; L-valine biosynthesis; L-valine from pyruvate: step 3/4. In terms of biological role, functions in the biosynthesis of branched-chain amino acids. Catalyzes the dehydration of (2R,3R)-2,3-dihydroxy-3-methylpentanoate (2,3-dihydroxy-3-methylvalerate) into 2-oxo-3-methylpentanoate (2-oxo-3-methylvalerate) and of (2R)-2,3-dihydroxy-3-methylbutanoate (2,3-dihydroxyisovalerate) into 2-oxo-3-methylbutanoate (2-oxoisovalerate), the penultimate precursor to L-isoleucine and L-valine, respectively. The sequence is that of Dihydroxy-acid dehydratase from Ralstonia nicotianae (strain ATCC BAA-1114 / GMI1000) (Ralstonia solanacearum).